The sequence spans 61 residues: Disintegrin rubistatin (61 aa).

One can recognise a Disintegrin domain in the interval 1-61; the sequence is NPCCDAATCK…ADCPRNGLYG (61 aa). 4 cysteine pairs are disulfide-bonded: C3/C26, C17/C23, C22/C47, and C35/C54. Residues 39-41 carry the Cell attachment site; atypical (MVD) motif; the sequence is MVD.

Belongs to the venom metalloproteinase (M12B) family. P-II subfamily. P-IIa sub-subfamily. In terms of assembly, monomer. As to expression, expressed by the venom gland.

The protein resides in the secreted. Recombinant disintegrin rubistatin inhibits ADP-induced platelet aggregation. In addition, it strongly induces apoptosis, and inhibits cell migration and proliferation of the human cancer cell line SK-Mel-28. This is Disintegrin rubistatin from Crotalus ruber ruber (Red diamond rattlesnake).